The primary structure comprises 349 residues: Microbial Terpene synthase-like protein 1 (349 aa).

4 residues coordinate Mg(2+): aspartate 98, aspartate 102, asparagine 243, and serine 247. A DDXXD motif motif is present at residues 98-102 (DDILD).

This sequence belongs to the terpene synthase family. Mg(2+) is required as a cofactor.

It participates in secondary metabolite biosynthesis; terpenoid biosynthesis. Functionally, sesquiterpene synthase converting farnesyl diphosphate to six sesquiterpenes, with beta-elemene, delta-cadinene and an unidentified oxygenated sesquiterpene as the major products. Has no diterpene synthase activity. This is Microbial Terpene synthase-like protein 1 from Selaginella moellendorffii (Spikemoss).